Consider the following 223-residue polypeptide: Probable transaldolase (223 aa).

K86 functions as the Schiff-base intermediate with substrate in the catalytic mechanism.

The protein belongs to the transaldolase family. Type 3B subfamily.

The protein resides in the cytoplasm. It catalyses the reaction D-sedoheptulose 7-phosphate + D-glyceraldehyde 3-phosphate = D-erythrose 4-phosphate + beta-D-fructose 6-phosphate. Its pathway is carbohydrate degradation; pentose phosphate pathway; D-glyceraldehyde 3-phosphate and beta-D-fructose 6-phosphate from D-ribose 5-phosphate and D-xylulose 5-phosphate (non-oxidative stage): step 2/3. Its function is as follows. Transaldolase is important for the balance of metabolites in the pentose-phosphate pathway. The polypeptide is Probable transaldolase (tal) (Thermoplasma volcanium (strain ATCC 51530 / DSM 4299 / JCM 9571 / NBRC 15438 / GSS1)).